A 206-amino-acid polypeptide reads, in one-letter code: Probable N-acetyltransferase 14 (206 aa).

Residues 55–206 form the N-acetyltransferase domain; that stretch reads LRFVLASFAL…TLVREFSKEL (152 aa). A helical transmembrane segment spans residues 57–77; that stretch reads FVLASFALALLLPVFLAVAAM.

It belongs to the camello family.

Its subcellular location is the membrane. Its function is as follows. Probable acetyltransferase. May act as a transcription factor regulating the expression of coproporphyrinogen oxidase by binding to a promoter regulatory element. This is Probable N-acetyltransferase 14 from Bos taurus (Bovine).